The sequence spans 77 residues: UPF0248 protein Pcal_0252 (77 aa).

Belongs to the UPF0248 family.

The polypeptide is UPF0248 protein Pcal_0252 (Pyrobaculum calidifontis (strain DSM 21063 / JCM 11548 / VA1)).